The primary structure comprises 374 residues: tRNA-specific 2-thiouridylase MnmA (374 aa).

ATP-binding positions include 17–24 (GMSGGVDS) and M43. Residues 103–105 (NPD) form an interaction with target base in tRNA region. C108 acts as the Nucleophile in catalysis. An intrachain disulfide couples C108 to C204. G132 provides a ligand contact to ATP. Residues 154–156 (KDQ) form an interaction with tRNA region. C204 functions as the Cysteine persulfide intermediate in the catalytic mechanism. Residues 316-317 (RY) are interaction with tRNA.

The protein belongs to the MnmA/TRMU family.

It localises to the cytoplasm. The catalysed reaction is S-sulfanyl-L-cysteinyl-[protein] + uridine(34) in tRNA + AH2 + ATP = 2-thiouridine(34) in tRNA + L-cysteinyl-[protein] + A + AMP + diphosphate + H(+). In terms of biological role, catalyzes the 2-thiolation of uridine at the wobble position (U34) of tRNA, leading to the formation of s(2)U34. This is tRNA-specific 2-thiouridylase MnmA from Pseudomonas fluorescens (strain Pf0-1).